Consider the following 596-residue polypeptide: MTCLILWYLWLISTFQLEFATASTANTTTTAKSGTSSSTEEPFPVLAVGKDGRGNYYVNSTFGTPGQRQRLLVDIIQPYINLVSGTSESHNEYSGVYHKHPSYLMNDSTSSVPVSPGQIYEISFIDGRAVNCTLVTDDMNFTNVSSENSSTALITDLMVTRDNVQFNSGSLSISNVSFFDIQSSNFKTSGLLGLSGKVTNPGNAIDSSQYTEQSYFLSLLKDADIIESSSYSLWLAGDTSTYKTYRDPISNCGKLLLGGVDPSLFTGTLGKFDLIPYVDPVSNAVSVGYPIVPLGPIYIVSNSGQSLNMTSKDFLSPALLDSTSSVSYLPTSTIIQIAVQIAATYVESLDRWLVQCSIADMGVSLGFRLRELTIEIPLRDLLSSTYDTSTNSSMFFSSGQEACFLTLYANTNTGVNILGEAFIKNIYMAMDLEDNTIAIAQAKKVEDDAVTEETNETTASTIIKKIKSGYIPYAKVMNSSNTRNLTLYPSYRSGYMFTVPGQLTAAYSNGVITGAGRSFYDTSRASTSARPSSTQFDSFSVSASEEWSNSTNRTSSASGAGVRLSSPYTFNKDPAGHVTRIASLLLLSIFSILIVL.

Positions 1–25 (MTCLILWYLWLISTFQLEFATASTA) are cleaved as a signal peptide. N-linked (GlcNAc...) asparagine glycans are attached at residues N26 and N59. The Lumenal segment spans residues 26-575 (NTTTTAKSGT…SPYTFNKDPA (550 aa)). The Peptidase A1 domain occupies 56–440 (YYVNSTFGTP…DLEDNTIAIA (385 aa)). Residue D74 is part of the active site. N106, N131, N140, N143, N148, N175, and N308 each carry an N-linked (GlcNAc...) asparagine glycan. D321 is a catalytic residue. N-linked (GlcNAc...) asparagine glycans are attached at residues N391, N455, N478, N484, N549, and N552. The chain crosses the membrane as a helical span at residues 576 to 596 (GHVTRIASLLLLSIFSILIVL).

It belongs to the peptidase A1 family.

It localises to the cytoplasm. The protein localises to the endoplasmic reticulum membrane. The polypeptide is Aspartic proteinase yapsin-7 (YPS7) (Saccharomyces cerevisiae (strain ATCC 204508 / S288c) (Baker's yeast)).